A 96-amino-acid polypeptide reads, in one-letter code: Small ribosomal subunit protein bS6 (96 aa).

Belongs to the bacterial ribosomal protein bS6 family.

Functionally, binds together with bS18 to 16S ribosomal RNA. This is Small ribosomal subunit protein bS6 from Acidothermus cellulolyticus (strain ATCC 43068 / DSM 8971 / 11B).